Reading from the N-terminus, the 141-residue chain is Lutropin subunit beta (141 aa).

The N-terminal stretch at 1 to 20 (MERLQGLLLWLLLSPSVVWA) is a signal peptide. Disulfide bonds link Cys-29–Cys-77, Cys-43–Cys-92, Cys-54–Cys-108, Cys-58–Cys-110, and Cys-113–Cys-120. Asn-33 carries N-linked (GlcNAc...) asparagine glycosylation.

The protein belongs to the glycoprotein hormones subunit beta family. As to quaternary structure, heterodimer of a common alpha chain and a unique beta chain which confers biological specificity to thyrotropin, lutropin, follitropin and gonadotropin.

It localises to the secreted. Its function is as follows. Promotes spermatogenesis and ovulation by stimulating the testes and ovaries to synthesize steroids. The chain is Lutropin subunit beta (Lhb) from Mus musculus (Mouse).